A 148-amino-acid chain; its full sequence is Large ribosomal subunit protein bL27m (148 aa).

The N-terminal 30 residues, 1–30 (MALAVLAWRTRTAVIALLSPPQAAALAVRY), are a transit peptide targeting the mitochondrion.

This sequence belongs to the bacterial ribosomal protein bL27 family. In terms of assembly, component of the mitochondrial ribosome large subunit (39S) which comprises a 16S rRNA and about 50 distinct proteins.

The protein resides in the mitochondrion. This Bos taurus (Bovine) protein is Large ribosomal subunit protein bL27m (MRPL27).